The sequence spans 377 residues: Putative efflux system component YknX (377 aa).

Residues 3 to 23 (KVWIGIGIAVIVALFVGINIY) traverse the membrane as a helical segment. A coiled-coil region spans residues 95 to 187 (TNEQLSLEKE…RVSDLEVKSE (93 aa)).

Belongs to the membrane fusion protein (MFP) (TC 8.A.1) family. Part of a complex composed of YknX, YknY and YknZ. The complex interacts with YknW.

Its subcellular location is the cell membrane. Functionally, part of an unusual four-component transporter, which is required for protection against the killing factor SdpC (sporulation-delaying protein). This is Putative efflux system component YknX (yknX) from Bacillus subtilis (strain 168).